Consider the following 249-residue polypeptide: Putative TrmH family tRNA/rRNA methyltransferase (249 aa).

S-adenosyl-L-methionine-binding residues include Gly-196, Ile-216, and Leu-225.

Belongs to the class IV-like SAM-binding methyltransferase superfamily. RNA methyltransferase TrmH family.

The chain is Putative TrmH family tRNA/rRNA methyltransferase from Staphylococcus haemolyticus (strain JCSC1435).